Here is a 487-residue protein sequence, read N- to C-terminus: Serine/threonine-protein kinase 4 (487 aa).

Residue methionine 1 is modified to N-acetylmethionine. Threonine 3 is modified (phosphothreonine). Residues 30-281 form the Protein kinase domain; that stretch reads FDVLEKLGEG…ATQLLQHPFV (252 aa). Residues 36–44 and lysine 59 contribute to the ATP site; that span reads LGEGSYGSV. Residue aspartate 149 is the Proton acceptor of the active site. The residue at position 183 (threonine 183) is a Phosphothreonine; by autocatalysis. Serine 265 bears the Phosphoserine mark. Residues 290–310 adopt a coiled-coil conformation; sequence LRDLINEAMDVKLKRQESQQR. Basic and acidic residues predominate over residues 303–312; sequence KRQESQQREV. The segment at 303-332 is disordered; that stretch reads KRQESQQREVDQDDEENSEEDEMDSGTMVR. A compositionally biased stretch (acidic residues) spans 313–326; sequence DQDDEENSEEDEMD. Residue serine 320 is modified to Phosphoserine. Phosphothreonine occurs at positions 340 and 367. Threonine 387 is subject to Phosphothreonine; by PKB/AKT1. A phosphoserine mark is found at serine 410 and serine 414. Tyrosine 433 is subject to Phosphotyrosine. The 48-residue stretch at 433 to 480 folds into the SARAH domain; sequence YEFLKSWTVEDLQKRLLALDPMMEQEIEEIRQKYQSKRQPILDAIEAK.

This sequence belongs to the protein kinase superfamily. STE Ser/Thr protein kinase family. STE20 subfamily. Homodimer; mediated via the coiled-coil region. Interacts with NORE1, which inhibits autoactivation. Interacts with and stabilizes SAV1. Interacts with RASSF1. Interacts with FOXO3. Interacts with RASSF2 (via SARAH domain). Interacts with AR, PKB/AKT1, TNNI3 and SIRT1. Interacts with DLG5 (via PDZ domain 3). Interacts with MARK3 and SCRIB in the presence of DLG5. It depends on Mg(2+) as a cofactor. In terms of processing, autophosphorylated on serine and threonine residues. Phosphorylation at Thr-387 by PKB/AKT1, leads to inhibition of its: kinase activity, nuclear translocation and autophosphorylation at Thr-183. It also diminishes its cleavage by caspases and its ability to phosphorylate FOXO3. Post-translationally, proteolytically cleaved by caspase-3 during apoptosis at Asp-326 and Asp-349 resulting in a 37 kDa or a 39 kDa subunit respectively. The 39 kDa subunit is further cleaved into the 37 kDa form. Proteolytic cleavage results in kinase activation and nuclear translocation of the truncated form (MST1/N). It is less likely that cleavage at Asp-349 is a prerequisite for activation as this site is not conserved in the murine ortholog.

It is found in the cytoplasm. The protein localises to the nucleus. The catalysed reaction is L-seryl-[protein] + ATP = O-phospho-L-seryl-[protein] + ADP + H(+). It carries out the reaction L-threonyl-[protein] + ATP = O-phospho-L-threonyl-[protein] + ADP + H(+). Its activity is regulated as follows. Inhibited by the C-terminal non-catalytic region. Activated by caspase-cleavage. Full activation also requires homodimerization and autophosphorylation of Thr-183. Activated by RASSF1 which acts by preventing its dephosphorylation. Stress-activated, pro-apoptotic kinase which, following caspase-cleavage, enters the nucleus and induces chromatin condensation followed by internucleosomal DNA fragmentation. Key component of the Hippo signaling pathway which plays a pivotal role in organ size control and tumor suppression by restricting proliferation and promoting apoptosis. The core of this pathway is composed of a kinase cascade wherein STK3/MST2 and STK4/MST1, in complex with its regulatory protein SAV1, phosphorylates and activates LATS1/2 in complex with its regulatory protein MOB1, which in turn phosphorylates and inactivates YAP1 oncoprotein and WWTR1/TAZ. Phosphorylation of YAP1 by LATS2 inhibits its translocation into the nucleus to regulate cellular genes important for cell proliferation, cell death, and cell migration. STK3/MST2 and STK4/MST1 are required to repress proliferation of mature hepatocytes, to prevent activation of facultative adult liver stem cells (oval cells), and to inhibit tumor formation. Phosphorylates 'Ser-14' of histone H2B (H2BS14ph) during apoptosis. Phosphorylates FOXO3 upon oxidative stress, which results in its nuclear translocation and cell death initiation. Phosphorylates MOBKL1A, MOBKL1B and RASSF2. Phosphorylates TNNI3 (cardiac Tn-I) and alters its binding affinity to TNNC1 (cardiac Tn-C) and TNNT2 (cardiac Tn-T). Phosphorylates FOXO1 on 'Ser-212' and regulates its activation and stimulates transcription of PMAIP1 in a FOXO1-dependent manner. Phosphorylates SIRT1 and inhibits SIRT1-mediated p53/TP53 deacetylation, thereby promoting p53/TP53 dependent transcription and apoptosis upon DNA damage. Acts as an inhibitor of PKB/AKT1. Phosphorylates AR on 'Ser-650' and suppresses its activity by intersecting with PKB/AKT1 signaling and antagonizing formation of AR-chromatin complexes. This chain is Serine/threonine-protein kinase 4 (STK4), found in Colobus guereza (Mantled guereza).